Consider the following 134-residue polypeptide: Protein Turandot E (134 aa).

The signal sequence occupies residues 1 to 38 (MSYTRTIHSSASILKMNSALQISCLLVVLGCLLGSGHC).

It belongs to the Turandot family.

It localises to the secreted. Its function is as follows. A humoral factor that may play a role in stress tolerance. The chain is Protein Turandot E from Drosophila sechellia (Fruit fly).